Reading from the N-terminus, the 382-residue chain is Mitogen-activated protein kinase 9 (382 aa).

The region spanning 26-321 (YQQLKPIGSG…VDEALRHPYI (296 aa)) is the Protein kinase domain. ATP contacts are provided by residues 33–38 (GSGAQG) and K55. Catalysis depends on D151, which acts as the Proton acceptor. At T183 the chain carries Phosphothreonine. The TXY motif lies at 183 to 185 (TPY). Phosphotyrosine is present on Y185.

This sequence belongs to the protein kinase superfamily. CMGC Ser/Thr protein kinase family. MAP kinase subfamily. It depends on Mg(2+) as a cofactor. Post-translationally, dually phosphorylated on Thr-183 and Tyr-185, which activates the enzyme. In terms of tissue distribution, expressed in the neuroepithelium of developing brain at stages 16 to 26.

The enzyme catalyses L-seryl-[protein] + ATP = O-phospho-L-seryl-[protein] + ADP + H(+). The catalysed reaction is L-threonyl-[protein] + ATP = O-phospho-L-threonyl-[protein] + ADP + H(+). Its activity is regulated as follows. Activated by threonine and tyrosine phosphorylation. In terms of biological role, responds to activation by environmental stress and pro-inflammatory cytokines by phosphorylating a number of transcription factors, primarily components of AP-1 such as JUN and ATF2 and thus regulates AP-1 transcriptional activity. May play a role in the development of the central nervous system during embryogenesis. May play a role in the regulation of the circadian clock. The polypeptide is Mitogen-activated protein kinase 9 (MAPK9) (Gallus gallus (Chicken)).